The sequence spans 546 residues: Cholesterol oxidase (546 aa).

Positions 1 to 42 (MTAQQHLSRRRMLGMAAFGAAALAGGTTIAAPRAAAAAKSAA) form a signal peptide, tat-type signal. The FAD site is built by Y57, G58, E77, G152, N156, G157, M159, and V287. Active-site proton acceptor residues include E398 and H484. The FAD site is built by G512 and F524.

Belongs to the GMC oxidoreductase family. As to quaternary structure, monomer. Requires FAD as cofactor. Post-translationally, predicted to be exported by the Tat system. The position of the signal peptide cleavage has been experimentally proven.

The protein localises to the secreted. The catalysed reaction is cholesterol + O2 = cholest-5-en-3-one + H2O2. It carries out the reaction cholest-5-en-3-one = cholest-4-en-3-one. It functions in the pathway steroid metabolism; cholesterol degradation. In terms of biological role, bifunctional enzyme that catalyzes the oxidation and isomerization of cholesterol to cholestenone (cholest-4-en-3-one), an initial step in the cholesterol degradation process. The cholesterol degradation pathway allows the bacterium to utilize cholesterol as its sole source of carbon and energy. The polypeptide is Cholesterol oxidase (Streptomyces sp. (strain SA-COO)).